A 308-amino-acid polypeptide reads, in one-letter code: Transaldolase (308 aa).

Lys125 functions as the Schiff-base intermediate with substrate in the catalytic mechanism.

This sequence belongs to the transaldolase family. Type 1 subfamily. In terms of assembly, homodimer.

The protein localises to the cytoplasm. The catalysed reaction is D-sedoheptulose 7-phosphate + D-glyceraldehyde 3-phosphate = D-erythrose 4-phosphate + beta-D-fructose 6-phosphate. Its pathway is carbohydrate degradation; pentose phosphate pathway; D-glyceraldehyde 3-phosphate and beta-D-fructose 6-phosphate from D-ribose 5-phosphate and D-xylulose 5-phosphate (non-oxidative stage): step 2/3. Functionally, transaldolase is important for the balance of metabolites in the pentose-phosphate pathway. This is Transaldolase from Pseudomonas fluorescens (strain ATCC BAA-477 / NRRL B-23932 / Pf-5).